The chain runs to 498 residues: ADP,ATP carrier protein 1 (498 aa).

Residues 1-33 lie on the Cytoplasmic side of the membrane; that stretch reads MSTSKSENYLSELRKIIWPIEQYENKKFLPLAF. Residues 34–54 traverse the membrane as a helical segment; the sequence is MMFCILLNYSTLRSIKDGFVV. Cys-37 and Cys-85 are joined by a disulfide. Topologically, residues 55–67 are extracellular; that stretch reads TDIGTESISFLKT. A helical membrane pass occupies residues 68 to 88; that stretch reads YIVLPSAVIAMIIYVKLCDIL. The Cytoplasmic portion of the chain corresponds to 89–92; the sequence is KQEN. A helical membrane pass occupies residues 93 to 113; that stretch reads VFYVITSFFLGYFALFAFVLY. Residues 114 to 147 are Extracellular-facing; it reads PYPDLVHPDHKTIESLSLAYPNFKWFIKIVGKWS. Residues 148-168 traverse the membrane as a helical segment; sequence FASFYTIAELWGTMMLSLLFW. The Cytoplasmic portion of the chain corresponds to 169 to 184; it reads QFANQITKIAEAKRFY. A helical transmembrane segment spans residues 185–205; that stretch reads SMFGLLANLALPVTSVVIGYF. Topologically, residues 206-218 are extracellular; sequence LHEKTQIVAEHLK. The helical transmembrane segment at 219-239 threads the bilayer; the sequence is FVPLFVIMITSSFLIILTYRW. Topologically, residues 240-279 are cytoplasmic; sequence MNKNVLTDPRLYDPALVKEKKTKAKLSFIESLKMIFTSKY. The chain crosses the membrane as a helical span at residues 280–300; the sequence is VGYIALLIIAYGVSVNLVEGV. The Extracellular segment spans residues 301-320; sequence WKSKVKELYPTKEAYTIYMG. A helical membrane pass occupies residues 321–341; that stretch reads QFQFYQGWVAIAFMLIGSNIL. Residues 342-348 are Cytoplasmic-facing; sequence RKVSWLT. A helical membrane pass occupies residues 349–369; sequence AAMITPLMMFITGAAFFSFIF. Residues 370-379 are Extracellular-facing; that stretch reads FDSVIAMNLT. A helical membrane pass occupies residues 380 to 400; the sequence is GILASSPLTLAVMIGMIQNVL. Over 401 to 438 the chain is Cytoplasmic; that stretch reads SKGVKYSLFDATKNMAYIPLDKDLRVKGQAAVEVIGGR. Residue 436-442 participates in ATP binding; the sequence is GGRLGKS. Residues 439 to 459 traverse the membrane as a helical segment; that stretch reads LGKSGGAIIQSTFFILFPVFG. Over 460 to 465 the chain is Extracellular; sequence FIEATP. The helical transmembrane segment at 466–486 threads the bilayer; that stretch reads YFASIFFIIVILWIFAVKGLN. The Cytoplasmic segment spans residues 487 to 498; the sequence is KEYQVLVNKNEK.

This sequence belongs to the ADP/ATP translocase tlc family.

It is found in the cell membrane. Its function is as follows. Provides the rickettsial cell with host ATP in exchange for rickettsial ADP. This is an obligate exchange system. This energy acquiring activity is an important component of rickettsial parasitism. The protein is ADP,ATP carrier protein 1 (tlcA) of Rickettsia prowazekii (strain Madrid E).